Consider the following 305-residue polypeptide: Short-chain dehydrogenase/reductase VdtF (305 aa).

NADP(+)-binding residues include Leu28 and Asn98. The active-site Proton donor is Ser192. The NADP(+) site is built by Tyr206, Lys210, and Thr241. Tyr206 serves as the catalytic Proton acceptor. Lys210 acts as the Lowers pKa of active site Tyr in catalysis.

The protein belongs to the short-chain dehydrogenases/reductases (SDR) family.

The enzyme catalyses methyl 2-[(3S)-9,10-dihydroxy-7-methoxy-1-oxo-1H,3H,4H-naphtho[2,3-c]pyran-3-yl]acetate + AH2 = semiviriditoxin + A. The catalysed reaction is 9,10-dihydroxy-7-methoxy-3-(2-oxopropyl)-1H-benzo[g]isochromen-1-one + AH2 = (3S)-9,10-dihydroxy-7-methoxy-3-(2-oxopropyl)-1H,3H,4H-naphtho[2,3-c]pyran-1-one + A. It participates in secondary metabolite biosynthesis. Its function is as follows. Short-chain dehydrogenase/reductase; part of the gene cluster that mediates the biosynthesis of viriditoxin, one of the 'classical' secondary metabolites produced by fungi and that has antibacterial activity. The first step is performed by the polyketide synthase VdtA which condenses one acetyl-CoA and 6 malonyl-CoA units to form the heptaketide monomer backbone of viriditoxin. The product of VdtA is then O-methylated on C7 by the O-methyltransferase VdtC. The O-methyl group is important for the stereoselective coupling of the monomers at the final step of viriditoxin biosynthesis. The short-chain dehydrogenase/reductase VdtF then acts as a stereospecific reductase converting the pyrone to dihydropyrone via the reduction of the C3-C4 double bond. The FAD-binding monooxygenase VdtE then converts the ketone group into a methyl-ester group to yield semi-viriditoxin. Finally, the laccase VdtB is involved in dimerization of 2 semi-viriditoxin molecules to yield the final viriditoxin. VdtB is responsible for the regioselective 6,6'-coupling of semi-viriditoxin, which yields (M)-viriditoxin and (P)-viriditoxin at a ratio of 1:2. The non-catalytic carboxylesterase-like protein VdtD affects the stereochemistical outcome of the coupling. The highly reducing polyketide synthase VdtX is not involved in viriditoxin synthesis, but might possibly play a role in the production of additional metabolites not identified yet. The chain is Short-chain dehydrogenase/reductase VdtF from Byssochlamys spectabilis (Paecilomyces variotii).